A 421-amino-acid polypeptide reads, in one-letter code: MSQLIDRRQNAGKKSTVNRQRFLRRYKSQIKKAVSEAVGKRSITEIDQGEQITIPAKDIYEPQFHRGHGGHIERVLPGNDNFIAGDRIKRPSGGGAGGAGGNASDSGEGEDNFVFELSREEFLELYFEDLELPDLVKKELARISTYKTVRAGVTTSGIPNNINVLRSMKQATGRRVALASPYKRRLKEAEEELERLKQLANPDKIDLLKLERDIEFFKKKIQTVPFIDTIDLRYNHRVRVPSPSTQAVMFCVMDVSGSMDEAKKDIAKRFFILLYMFLTKNYEKIELVFIRHHTSAKEVNEEEFFYSRETGGTVVSSALELLNTIIEARYPPQAWNIYVAQASDGDNWNADSPYCQELLQEKIMPLLQYFAYIEIMPRHHQSLWEVYQQVKERYPNFAMENIDNVADIYPVFRELFKRKTV.

Positions 83 to 110 (IAGDRIKRPSGGGAGGAGGNASDSGEGE) are disordered. The segment covering 92-101 (SGGGAGGAGG) has biased composition (gly residues).

This sequence belongs to the UPF0229 family.

The sequence is that of UPF0229 protein lpp2857 from Legionella pneumophila (strain Paris).